We begin with the raw amino-acid sequence, 270 residues long: 5-amino-6-(5-phospho-D-ribitylamino)uracil phosphatase YitU (270 aa).

Residue Asp11 is the Nucleophile of the active site. Asp11 contributes to the Mg(2+) binding site. Leu12 lines the phosphate pocket. Residue Asp13 participates in Mg(2+) binding. Residues 45 to 46 (TG) and Lys197 contribute to the phosphate site. Asp220 lines the Mg(2+) pocket. Residue Asn223 participates in phosphate binding.

This sequence belongs to the HAD-like hydrolase superfamily. Cof family. It depends on Mg(2+) as a cofactor.

The enzyme catalyses 5-amino-6-(5-phospho-D-ribitylamino)uracil + H2O = 5-amino-6-(D-ribitylamino)uracil + phosphate. It functions in the pathway cofactor biosynthesis; riboflavin biosynthesis; 5-amino-6-(D-ribitylamino)uracil from GTP: step 4/4. In terms of biological role, catalyzes the dephosphorylation of the riboflavin precursor 5-amino-6-(5-phospho-D-ribitylamino)uracil and of flavin mononucleotide (FMN) in vitro. The polypeptide is 5-amino-6-(5-phospho-D-ribitylamino)uracil phosphatase YitU (yitU) (Bacillus subtilis (strain 168)).